Reading from the N-terminus, the 1891-residue chain is Protein TIC 214 (1891 aa).

6 helical membrane passes run 18 to 38 (IINSVVVVGLYYGFLTTFSIG), 64 to 84 (FITGQLMMFISIYYAPLHLAL), 87 to 107 (PHTITVLALPYLLFHFFWNNH), 124 to 144 (LSIQCVFLNNLIFQLFNHFIL), 172 to 192 (VGWLIGHILFMKWLGLVLVWI), and 221 to 241 (IFSILLFITCVYYLGRIPSPI). 3 disordered regions span residues 248-300 (EASK…EGWD), 788-807 (EEQTKREEKKEKDKKEDNKR), and 1580-1607 (KNRSQEAKEPPSQRERGSDIENKGNLSP). Over residues 256 to 268 (VESEEERDVEIET) the composition is skewed to acidic residues. Positions 1582 to 1601 (RSQEAKEPPSQRERGSDIEN) are enriched in basic and acidic residues.

This sequence belongs to the TIC214 family. Part of the Tic complex.

It is found in the plastid. The protein resides in the chloroplast inner membrane. Involved in protein precursor import into chloroplasts. May be part of an intermediate translocation complex acting as a protein-conducting channel at the inner envelope. The sequence is that of Protein TIC 214 from Solanum lycopersicum (Tomato).